Consider the following 535-residue polypeptide: Xylan 1,3-beta-xylosidase (535 aa).

Catalysis depends on aspartate 16, which acts as the Proton acceptor. Glutamate 189 acts as the Proton donor in catalysis.

It belongs to the glycosyl hydrolase 43 family.

The catalysed reaction is Hydrolysis of successive xylose residues from the non-reducing termini of (1-&gt;3)-beta-D-xylans.. Its activity is regulated as follows. Inhibited by Ag(+), Cu(2+), Hg(2+), Mn(2+), Pb(2+), Zn(2+) and p-chloromercuric benzoic acid. Its function is as follows. Beta-1,3-xylosidase that hydrolyzes beta-1,3-xylooligosaccharides to D-xylose. The polypeptide is Xylan 1,3-beta-xylosidase (xloA) (Vibrio sp).